A 518-amino-acid polypeptide reads, in one-letter code: MTEPTQPNAAQPDAARPNVAPEMDDNKIMTERREKLRELREQGVAYPNDFRPTHHAEDLQSQYEQSDKEALEANPLEVAIAGRMMLKRVMGKASFATVRDGSGQIQFFITPTDVGQETYDAFKKWDMGDIVAARGVLFRTNKGELSVRCTELRLLSKSLRPLPDKFHGLADQEMKYRQRYVDLIVTPETRKTFVARTKAISSIRKFMAEADFMEVETPMLHPIPGGAAAKPFTTHHNALDMQMFLRIAPELYLKRLVVGGFERVFEINRNFRNEGVSVRHNPEFTMIEFYAAYTDYKWLMDFTEQLIRQAAIDALGTATITYQGRELDLAKPFHRLTITQAIQKYAPQYTNEQLADSAFLRTELKKFGVDASQPQFLNAGVGSLQLALFEETAESQLWEPTYIIDYPIEVSPLARASDKVAGITERFELFITGREIANGFSELNDPEDQAARFKKQVDQKEAGDEEAMFYDADYIRALEYGMPPAGGCGIGIDRLVMMLTDSPSIRDVILFPHLRRED.

The disordered stretch occupies residues methionine 1–isoleucine 28. Mg(2+) is bound by residues glutamate 428 and glutamate 435.

The protein belongs to the class-II aminoacyl-tRNA synthetase family. Homodimer. It depends on Mg(2+) as a cofactor.

It localises to the cytoplasm. The enzyme catalyses tRNA(Lys) + L-lysine + ATP = L-lysyl-tRNA(Lys) + AMP + diphosphate. The polypeptide is Lysine--tRNA ligase (Paraburkholderia phytofirmans (strain DSM 17436 / LMG 22146 / PsJN) (Burkholderia phytofirmans)).